A 222-amino-acid chain; its full sequence is Probable GTP-binding protein EngB (222 aa).

The 176-residue stretch at 27–202 folds into the EngB-type G domain; that stretch reads TGIEVAFAGR…AKKLDEWFLG (176 aa). GTP contacts are provided by residues 35–42, 61–65, 81–84, 148–151, and 181–183; these read GRSNAGKS, GRTQL, DLPG, TKAD, and FSS. Mg(2+)-binding residues include serine 42 and threonine 63.

The protein belongs to the TRAFAC class TrmE-Era-EngA-EngB-Septin-like GTPase superfamily. EngB GTPase family. The cofactor is Mg(2+).

Functionally, necessary for normal cell division and for the maintenance of normal septation. In Pseudoalteromonas translucida (strain TAC 125), this protein is Probable GTP-binding protein EngB.